Reading from the N-terminus, the 294-residue chain is Flavin-dependent thymidylate synthase (294 aa).

Residues 27-250 (GFIRVIDYMG…PFTYEAFEEY (224 aa)) enclose the ThyX domain. Residues Thr73, 96–98 (RHR), and Glu104 each bind FAD. DUMP-binding positions include 93 to 96 (QWIR), 104 to 108 (EYSAR), and Arg189. Residues 96-106 (RHRTASVNEYS) carry the ThyX motif motif. FAD is bound by residues 205 to 207 (NLH) and His211. Arg216 serves as a coordination point for dUMP. Arg216 functions as the Involved in ionization of N3 of dUMP, leading to its activation in the catalytic mechanism.

Belongs to the thymidylate synthase ThyX family. Homotetramer. The cofactor is FAD.

The enzyme catalyses dUMP + (6R)-5,10-methylene-5,6,7,8-tetrahydrofolate + NADPH + H(+) = dTMP + (6S)-5,6,7,8-tetrahydrofolate + NADP(+). It participates in pyrimidine metabolism; dTTP biosynthesis. Its function is as follows. Catalyzes the reductive methylation of 2'-deoxyuridine-5'-monophosphate (dUMP) to 2'-deoxythymidine-5'-monophosphate (dTMP) while utilizing 5,10-methylenetetrahydrofolate (mTHF) as the methyl donor, and NADPH and FADH(2) as the reductant. The polypeptide is Flavin-dependent thymidylate synthase (Rickettsia prowazekii (strain Madrid E)).